Reading from the N-terminus, the 215-residue chain is Cytochrome b6 (215 aa).

Residues 32 to 52 (IFYCLGGITLTCFLVQVATGF) traverse the membrane as a helical segment. Cys35 is a binding site for heme c. 2 residues coordinate heme b: His86 and His100. The next 3 membrane-spanning stretches (helical) occupy residues 90-110 (ASMM…TGGF), 116-136 (LTWV…VTGY), and 186-206 (LHTF…FLMI). Heme b is bound by residues His187 and His202.

It belongs to the cytochrome b family. PetB subfamily. In terms of assembly, the 4 large subunits of the cytochrome b6-f complex are cytochrome b6, subunit IV (17 kDa polypeptide, PetD), cytochrome f and the Rieske protein, while the 4 small subunits are PetG, PetL, PetM and PetN. The complex functions as a dimer. It depends on heme b as a cofactor. Heme c serves as cofactor.

The protein localises to the plastid. The protein resides in the chloroplast thylakoid membrane. Its function is as follows. Component of the cytochrome b6-f complex, which mediates electron transfer between photosystem II (PSII) and photosystem I (PSI), cyclic electron flow around PSI, and state transitions. This chain is Cytochrome b6, found in Arabidopsis thaliana (Mouse-ear cress).